The following is a 424-amino-acid chain: 3-oxo-tetronate kinase (424 aa).

ATP-binding positions include Ser260, 364 to 367 (GGET), and Gly407.

It belongs to the four-carbon acid sugar kinase family.

It carries out the reaction 3-dehydro-L-erythronate + ATP = 3-dehydro-4-O-phospho-L-erythronate + ADP + H(+). It catalyses the reaction 3-dehydro-D-erythronate + ATP = 3-dehydro-4-O-phospho-D-erythronate + ADP + H(+). Its function is as follows. Catalyzes the ATP-dependent phosphorylation of 3-oxo-tetronate to 3-oxo-tetronate 4-phosphate. This chain is 3-oxo-tetronate kinase, found in Pectobacterium atrosepticum (strain SCRI 1043 / ATCC BAA-672) (Erwinia carotovora subsp. atroseptica).